The chain runs to 201 residues: Peptide deformylase (201 aa).

A compositionally biased stretch (polar residues) spans 1–17; that stretch reads MANNFSQLARKSKTNSP. Residues 1-24 form a disordered region; sequence MANNFSQLARKSKTNSPIEKVSKE. Fe cation-binding residues include Cys-121 and His-163. Glu-164 is an active-site residue. Position 167 (His-167) interacts with Fe cation.

It belongs to the polypeptide deformylase family. It depends on Fe(2+) as a cofactor.

It catalyses the reaction N-terminal N-formyl-L-methionyl-[peptide] + H2O = N-terminal L-methionyl-[peptide] + formate. In terms of biological role, removes the formyl group from the N-terminal Met of newly synthesized proteins. Requires at least a dipeptide for an efficient rate of reaction. N-terminal L-methionine is a prerequisite for activity but the enzyme has broad specificity at other positions. This is Peptide deformylase from Prochlorococcus marinus subsp. pastoris (strain CCMP1986 / NIES-2087 / MED4).